The sequence spans 65 residues: Small ribosomal subunit protein bS21 (65 aa).

Belongs to the bacterial ribosomal protein bS21 family.

This Aster yellows phytoplasma protein is Small ribosomal subunit protein bS21.